The following is a 509-amino-acid chain: Steroid 17-alpha-hydroxylase/17,20 lyase (509 aa).

A heme-binding site is contributed by C445.

Belongs to the cytochrome P450 family. The cofactor is heme.

It is found in the membrane. The enzyme catalyses a C21-steroid + reduced [NADPH--hemoprotein reductase] + O2 = a 17alpha-hydroxy-C21-steroid + oxidized [NADPH--hemoprotein reductase] + H2O + H(+). The catalysed reaction is 17alpha-hydroxyprogesterone + reduced [NADPH--hemoprotein reductase] + O2 = androst-4-ene-3,17-dione + acetate + oxidized [NADPH--hemoprotein reductase] + H2O + 2 H(+). It catalyses the reaction 17alpha-hydroxypregnenolone + reduced [NADPH--hemoprotein reductase] + O2 = 3beta-hydroxyandrost-5-en-17-one + acetate + oxidized [NADPH--hemoprotein reductase] + H2O + 2 H(+). The protein operates within lipid metabolism; steroid biosynthesis. Its function is as follows. Conversion of pregnenolone and progesterone to their 17-alpha-hydroxylated products and subsequently to dehydroepiandrosterone (DHEA) and androstenedione. Catalyzes both the 17-alpha-hydroxylation and the 17,20-lyase reaction. In Squalus acanthias (Spiny dogfish), this protein is Steroid 17-alpha-hydroxylase/17,20 lyase (CYP17A1).